The sequence spans 450 residues: Calcium-binding and coiled-coil domain-containing protein 2 (450 aa).

The short motif at 133–136 (ILVV) is the CLIR element. Residues 135–349 (VVTTQSEVEE…RENNRLLSYM (215 aa)) are a coiled coil. The LIR-like motif lies at 203 to 206 (DCWE). Positions 371–381 (DPGLVFGNPYS) are interaction with LGALS8. Residues 395 to 450 (KKCPTCKSDFAADVFDHNLALEQHLQTLSLNCPICDKTFPAKEKQIFEDHVFCHTL) are interaction with MYO6. The UBZ1-type zinc-finger motif lies at 423–448 (SLNCPICDKTFPAKEKQIFEDHVFCH). Residues Cys-426, Cys-429, His-444, and His-448 each coordinate Zn(2+).

The protein belongs to the CALCOCO family. In terms of assembly, dimer. Part of a complex consisting of CALCOCO2, TAX1BP1 and MYO6. Interacts with GEMIN4. Interacts with ATG8 family members MAP1LC3A, MAP1LC3B, GABARAP, GABARAPL1 and GABARAPL2. Interacts with ATG8 family member MAP1LC3C. Interacts with LGALS8. Interacts with TOM1; the interaction is indirect and is mediated by MYO6, which acts as a bridge between TOM1 and CALCOCO2. Interacts with AZI2.

The protein resides in the cytoplasm. Its subcellular location is the perinuclear region. It is found in the cytoskeleton. It localises to the cytoplasmic vesicle. The protein localises to the autophagosome membrane. Xenophagy-specific receptor required for autophagy-mediated intracellular bacteria degradation. Acts as an effector protein of galectin-sensed membrane damage that restricts the proliferation of infecting pathogens upon entry into the cytosol by targeting LGALS8-associated bacteria for autophagy. Initially orchestrates bacteria targeting to autophagosomes and subsequently ensures pathogen degradation by regulating pathogen-containing autophagosome maturation. Bacteria targeting to autophagosomes relies on its interaction with MAP1LC3A, MAP1LC3B and/or GABARAPL2, whereas regulation of pathogen-containing autophagosome maturation requires the interaction with MAP3LC3C. May play a role in ruffle formation and actin cytoskeleton organization and seems to negatively regulate constitutive secretion. The polypeptide is Calcium-binding and coiled-coil domain-containing protein 2 (Bos taurus (Bovine)).